The primary structure comprises 369 residues: Maltose/maltodextrin import ATP-binding protein MalK (369 aa).

In terms of domain architecture, ABC transporter spans 4–234 (VQLRNVTKAW…PADRFVAGFI (231 aa)). 36–43 (GPSGCGKS) is a binding site for ATP.

The protein belongs to the ABC transporter superfamily. Maltooligosaccharide importer (TC 3.A.1.1.1) family. The complex is composed of two ATP-binding proteins (MalK), two transmembrane proteins (MalG and MalK) and a solute-binding protein (MalE).

It localises to the cell inner membrane. It catalyses the reaction D-maltose(out) + ATP + H2O = D-maltose(in) + ADP + phosphate + H(+). Its function is as follows. Part of the ABC transporter complex MalEFGK involved in maltose/maltodextrin import. Responsible for energy coupling to the transport system. In Salmonella paratyphi A (strain ATCC 9150 / SARB42), this protein is Maltose/maltodextrin import ATP-binding protein MalK.